The sequence spans 218 residues: uncharacterized protein (218 aa).

The 215-residue stretch at isoleucine 2 to lysine 216 folds into the ABC transporter domain. Glycine 34–threonine 41 provides a ligand contact to ATP.

The protein belongs to the ABC transporter superfamily.

This is an uncharacterized protein from Bacillus subtilis (strain 168).